Reading from the N-terminus, the 221-residue chain is MLFFRKRAEMPAPDQILPGRPTPLPTAERHFVNGRPLKGPYPEGIETALFGLGCFWGAERKFWQLGDGIWVTAVGYAAGTTPNPTYEEVCTGLTGHNEVVLVAYDPAAMPFERLLKTFWESHDPTQGMRQGNDVGTQYRSGLYVADAERRAQAEASRDAYGEALRAKGYGPITTEIRDPGPFYFAEAYHQQYLAKNPAGYCGLGGTGVACPIGTGVRNAAE.

The active site involves C54.

The protein belongs to the MsrA Met sulfoxide reductase family.

It catalyses the reaction L-methionyl-[protein] + [thioredoxin]-disulfide + H2O = L-methionyl-(S)-S-oxide-[protein] + [thioredoxin]-dithiol. The enzyme catalyses [thioredoxin]-disulfide + L-methionine + H2O = L-methionine (S)-S-oxide + [thioredoxin]-dithiol. Functionally, has an important function as a repair enzyme for proteins that have been inactivated by oxidation. Catalyzes the reversible oxidation-reduction of methionine sulfoxide in proteins to methionine. The sequence is that of Peptide methionine sulfoxide reductase MsrA from Methylobacterium nodulans (strain LMG 21967 / CNCM I-2342 / ORS 2060).